Here is a 156-residue protein sequence, read N- to C-terminus: MKLYNEFINIAKTFNKELDIIPLLYGSLGLEKVTGLDFSPEDIDLLIPLIFLEEKWEKLKKVMELHGYKMVDLHEHEFKKTNTKIGISYIEDLKPFADVDYNNLEIFEDGGAKYHLLTIDDYLKIYKKSLLDGYRRRKKNHKDQSKINILNKLIRN.

This sequence to L.lactis TrpF C-terminal region.

This is an uncharacterized protein from Bacillus subtilis (strain 168).